We begin with the raw amino-acid sequence, 55 residues long: Large ribosomal subunit protein bL33A (55 aa).

Belongs to the bacterial ribosomal protein bL33 family.

This chain is Large ribosomal subunit protein bL33A, found in Mycolicibacterium vanbaalenii (strain DSM 7251 / JCM 13017 / BCRC 16820 / KCTC 9966 / NRRL B-24157 / PYR-1) (Mycobacterium vanbaalenii).